A 214-amino-acid polypeptide reads, in one-letter code: External core antigen (214 aa).

A signal peptide spans 1 to 19; sequence MQLFHLCLIISCTCPTVQA. The HBEAG stretch occupies residues 25-27; sequence GWL. A disordered region spans residues 165–214; the sequence is NAPILSTLPETTVVRRRDRGRSPRRRTPSPRRRRSQSPRRRRSQSRESQC. Residues 178-207 show a composition bias toward basic residues; that stretch reads VRRRDRGRSPRRRTPSPRRRRSQSPRRRRS. One copy of the 1; half-length repeat lies at 186 to 192; the sequence is SPRRRTP. Residues 186–208 form a 3 X 8 AA repeats of S-P-R-R-R-R-S-Q region; sequence SPRRRTPSPRRRRSQSPRRRRSQ. A propeptide spanning residues 186-214 is cleaved from the precursor; it reads SPRRRTPSPRRRRSQSPRRRRSQSRESQC. 2 consecutive repeat copies span residues 193–200 and 201–208.

This sequence belongs to the orthohepadnavirus precore antigen family. In terms of assembly, homodimerizes. Post-translationally, phosphorylated. In terms of processing, cleaved by host furin.

The protein resides in the secreted. It localises to the host nucleus. May regulate immune response to the intracellular capsid in acting as a T-cell tolerogen, by having an immunoregulatory effect which prevents destruction of infected cells by cytotoxic T-cells. This immune regulation may predispose to chronicity during perinatal infections and prevent severe liver injury during adult infections. The polypeptide is External core antigen (Hepatitis B virus genotype A2 subtype adw2 (isolate Germany/991/1990) (HBV-A)).